The primary structure comprises 56 residues: Light-harvesting protein B-880 beta chain (56 aa).

Residues Ala-1–Gly-22 are Cytoplasmic-facing. The a bacteriochlorophyll site is built by His-21 and His-39. The chain crosses the membrane as a helical span at residues Val-23–Trp-45. Topologically, residues Arg-46–Ala-56 are periplasmic.

It belongs to the antenna complex beta subunit family. The core complex is formed by different alpha and beta chains, binding bacteriochlorophyll molecules, and arranged most probably in tetrameric structures disposed around the reaction center. The non-pigmented gamma chains may constitute additional components.

The protein localises to the cell inner membrane. Functionally, antenna complexes are light-harvesting systems, which transfer the excitation energy to the reaction centers. The chain is Light-harvesting protein B-880 beta chain from Afifella marina (Rhodobium marinum).